The primary structure comprises 246 residues: Pyrroloquinoline-quinone synthase (246 aa).

It belongs to the PqqC family.

It carries out the reaction 6-(2-amino-2-carboxyethyl)-7,8-dioxo-1,2,3,4,7,8-hexahydroquinoline-2,4-dicarboxylate + 3 O2 = pyrroloquinoline quinone + 2 H2O2 + 2 H2O + H(+). It participates in cofactor biosynthesis; pyrroloquinoline quinone biosynthesis. Ring cyclization and eight-electron oxidation of 3a-(2-amino-2-carboxyethyl)-4,5-dioxo-4,5,6,7,8,9-hexahydroquinoline-7,9-dicarboxylic-acid to PQQ. This chain is Pyrroloquinoline-quinone synthase, found in Acidiphilium cryptum (strain JF-5).